The sequence spans 61 residues: Large ribosomal subunit protein uL30 (61 aa).

Belongs to the universal ribosomal protein uL30 family. In terms of assembly, part of the 50S ribosomal subunit.

The sequence is that of Large ribosomal subunit protein uL30 from Exiguobacterium sp. (strain ATCC BAA-1283 / AT1b).